Consider the following 138-residue polypeptide: F-box protein At4g12382 (138 aa).

Positions 7–53 constitute an F-box domain; sequence NPSFADLPSSLIEVIMSHLALKNNIRASAACKSWYEVGVSVRVVEKH.

This Arabidopsis thaliana (Mouse-ear cress) protein is F-box protein At4g12382.